The chain runs to 3432 residues: Genome polyprotein (3432 aa).

The segment at 2 to 15 (TKKPGGPGKNRAIN) is interaction with host EXOC1. The Cytoplasmic portion of the chain corresponds to 2–109 (TKKPGGPGKN…RKQNKRGGNE (108 aa)). The segment at 37 to 72 (LLDGRGPVRFVLALITFFKFTALAPTKALLGRWKAV) is hydrophobic; homodimerization of capsid protein C. Positions 106-127 (GGNEGSIMWLASLAVVIAYAGA) are cleaved as a propeptide — ER anchor for the capsid protein C, removed in mature form by serine protease NS3. Residues 110–130 (GSIMWLASLAVVIAYAGAMKL) traverse the membrane as a helical segment. Residues 131 to 253 (SNFQGKLLMT…ATRYLMKTEN (123 aa)) are Extracellular-facing. Asparagine 142 carries an N-linked (GlcNAc...) asparagine; by host glycan. A helical transmembrane segment spans residues 254 to 274 (WIIRNPGYAFLAATLGWMLGS). The Cytoplasmic segment spans residues 275-279 (NNGQR). The helical transmembrane segment at 280–294 (VVFTILLLLVAPAYS) threads the bilayer. Topologically, residues 295 to 746 (FNCLGMGNRD…QVFGGAFRTL (452 aa)) are extracellular. 6 cysteine pairs are disulfide-bonded: cysteine 297–cysteine 324, cysteine 354–cysteine 410, cysteine 354–cysteine 415, cysteine 368–cysteine 399, cysteine 386–cysteine 410, and cysteine 386–cysteine 415. Residues 392–405 (DRGWGNGCGLFGKG) are fusion peptide. The N-linked (GlcNAc...) asparagine; by host glycan is linked to asparagine 448. 2 disulfides stabilise this stretch: cysteine 484–cysteine 581 and cysteine 598–cysteine 629. A helical transmembrane segment spans residues 747–767 (FGGMSWITQGLMGALLLWMGV). At 768-773 (NARDRS) the chain is on the cytoplasmic side. Residues 774–794 (IALAFLATGGVLVFLATNVHA) form a helical membrane-spanning segment. The Extracellular segment spans residues 795 to 1219 (DTGCAIDITR…AFAEANSGGD (425 aa)). Disulfide bonds link cysteine 798/cysteine 809, cysteine 849/cysteine 937, cysteine 973/cysteine 1017, cysteine 1074/cysteine 1123, cysteine 1085/cysteine 1106, and cysteine 1107/cysteine 1110. Residues asparagine 924 and asparagine 1001 are each glycosylated (N-linked (GlcNAc...) asparagine; by host). The helical transmembrane segment at 1220–1240 (VLHLALIAVFKIQPAFLVMNM) threads the bilayer. The Cytoplasmic segment spans residues 1241–1250 (LSTRWTNQEN). Residues 1251-1271 (VVLVLGAALFQLASVDLQIGV) traverse the membrane as a helical segment. Position 1272 (histidine 1272) is a topological domain, lumenal. The helical transmembrane segment at 1273–1293 (GILNAAAIAWMIVRAITFPTT) threads the bilayer. The Cytoplasmic segment spans residues 1294–1309 (SSVTMPVLALLTPGMR). A helical membrane pass occupies residues 1310–1330 (ALYLDTYRIILLVIGICSLLQ). Residues 1331-1341 (ERKKTMAKKKG) are Lumenal-facing. The helical transmembrane segment at 1342–1362 (AVLLGLALTSTGWFSPTTIAA) threads the bilayer. The Cytoplasmic portion of the chain corresponds to 1363 to 1374 (GLMVCNPNKKRG). A helical transmembrane segment spans residues 1375–1395 (WPATEFLSAVGLMFAIVGGLA). Residues 1396–1398 (ELD) are Lumenal-facing. Residues 1399-1419 (IESMSIPFMLAGLMAVSYVVS) traverse the membrane as a helical segment. The Cytoplasmic portion of the chain corresponds to 1420–1476 (GKATDMWLERAADISWEMDAAITGSSRRLDVKLDDDGDFHLIDDPGVPWKVWVLRMS). The tract at residues 1427–1466 (LERAADISWEMDAAITGSSRRLDVKLDDDGDFHLIDDPGV) is interacts with and activates NS3 protease. An intramembrane region (helical) is located at residues 1477 to 1497 (CIGLAALTPWAIVPAAFGYWL). Residues 1498-2173 (TLKTTKRGGV…RMALEELPDA (676 aa)) lie on the Cytoplasmic side of the membrane. A Peptidase S7 domain is found at 1505–1682 (GGVFWDTPSP…DRQEEPVPEA (178 aa)). Catalysis depends on charge relay system; for serine protease NS3 activity residues histidine 1555, aspartate 1579, and serine 1639. Positions 1685–1841 (PNMLRKRQMT…DSNAPIHDLQ (157 aa)) constitute a Helicase ATP-binding domain. The segment at 1689 to 1692 (RKRQ) is important for RNA-binding. Position 1698-1705 (1698-1705 (LHPGSGKT)) interacts with ATP. The DEAH box signature appears at 1789–1792 (DEAH). A Helicase C-terminal domain is found at 1852–2017 (GYEWITEYAG…GLVAQLYGPE (166 aa)). At lysine 1893 the chain carries N6-acetyllysine; by host. A disordered region spans residues 1950–1971 (NPSPITSASAAQRRGRVGRNPN). A regulates the ATPase activity of NS3 helicase region spans residues 2168-2172 (EELPD). The helical transmembrane segment at 2174–2194 (LETITLIVAITVMTGGFFLLM) threads the bilayer. Residues 2195–2199 (MQRKG) lie on the Lumenal side of the membrane. The helical intramembrane region spans 2200–2220 (IGKMGLGALVLTLATFFLWAA). Residue glutamate 2221 is a topological domain, lumenal. A helical transmembrane segment spans residues 2222–2242 (VPGTKIAGTLLIALLLMVVLI). Topologically, residues 2243–2257 (PEPEKQRSQTDNQLA) are cytoplasmic. A helical membrane pass occupies residues 2258 to 2278 (VFLICVLTVVGVVAANEYGML). Over 2279 to 2311 (EKTKADLKSMFVGKTQASGLTGLPSMALDLRPA) the chain is Lumenal. An intramembrane region (helical) is located at residues 2312 to 2332 (TAWALYGGSTVVLTPLLKHLI). At 2333-2368 (TSEYVTTSLASINSQAGSLFVLPRGVPFTDLDLTVG) the chain is on the lumenal side. A helical membrane pass occupies residues 2369–2389 (LVFLGCWGQITLTTFLTAMVL). Residues 2390-2444 (ATLHYGYMLPGWQAEALRAAQRRTAAGIMKNAVVDGMVATDVPELERTTPLMQKK) are Cytoplasmic-facing. Residues 2445-2465 (VGQVLLIGVSVAAFLVNPNVT) traverse the membrane as a helical segment. Topologically, residues 2466 to 2469 (TVRE) are lumenal. A helical transmembrane segment spans residues 2470–2490 (AGVLVTAATLTLWDNGASAVW). Over 2491-3432 (NSTTATGLCH…DVLIQEDRVI (942 aa)) the chain is Cytoplasmic. One can recognise an mRNA cap 0-1 NS5-type MT domain in the interval 2528–2793 (GRPGGRTLGE…DVNLGSGTRA (266 aa)). S-adenosyl-L-methionine is bound at residue serine 2583. Phosphoserine is present on serine 2583. Lysine 2588 (for 2'-O-MTase activity) is an active-site residue. S-adenosyl-L-methionine contacts are provided by glycine 2613, tryptophan 2614, threonine 2631, lysine 2632, aspartate 2658, and valine 2659. Aspartate 2673 functions as the For 2'-O-MTase activity in the catalytic mechanism. Isoleucine 2674 contributes to the S-adenosyl-L-methionine binding site. Residues lysine 2709 and glutamate 2745 each act as for 2'-O-MTase activity in the active site. Tyrosine 2747 serves as a coordination point for S-adenosyl-L-methionine. Residues glutamate 2967, histidine 2971, cysteine 2976, and cysteine 2979 each contribute to the Zn(2+) site. The region spanning 3057-3209 (GKMYADDTAG…KPLDDRFATA (153 aa)) is the RdRp catalytic domain. Zn(2+) is bound by residues histidine 3244, cysteine 3260, and cysteine 3379.

In the N-terminal section; belongs to the class I-like SAM-binding methyltransferase superfamily. mRNA cap 0-1 NS5-type methyltransferase family. Homodimer. Interacts (via N-terminus) with host EXOC1 (via C-terminus); this interaction results in EXOC1 degradation through the proteasome degradation pathway. As to quaternary structure, forms heterodimers with envelope protein E in the endoplasmic reticulum and Golgi. In terms of assembly, homodimer; in the endoplasmic reticulum and Golgi. Interacts with protein prM. Interacts with non-structural protein 1. Interacts with host HSPA5. Homodimer; Homohexamer when secreted. Interacts with envelope protein E. NS1 interacts with NS4B. Interacts with host complement protein CFH; this interaction leads to the degradation of C3. As to quaternary structure, interacts (via N-terminus) with serine protease NS3. In terms of assembly, forms a heterodimer with serine protease NS3. May form homooligomers. Forms a heterodimer with NS2B. Interacts with non-structural protein 2A (via N-terminus). Interacts with NS4B. Interacts with unphosphorylated RNA-directed RNA polymerase NS5; this interaction stimulates RNA-directed RNA polymerase NS5 guanylyltransferase activity. Interacts with host ILF2. As to quaternary structure, interacts with serine protease NS3. In terms of assembly, homodimer. Interacts with host STAT2; this interaction inhibits the phosphorylation of the latter, and, when all viral proteins are present (polyprotein), targets STAT2 for degradation. Interacts with serine protease NS3. It depends on Mn(2+) as a cofactor. Mg(2+) is required as a cofactor. Specific enzymatic cleavages in vivo yield mature proteins. Cleavages in the lumen of endoplasmic reticulum are performed by host signal peptidase, whereas cleavages in the cytoplasmic side are performed by serine protease NS3. Signal cleavage at the 2K-4B site requires a prior NS3 protease-mediated cleavage at the 4A-2K site. Post-translationally, cleaved in post-Golgi vesicles by a host furin, releasing the mature small envelope protein M, and peptide pr. This cleavage is incomplete as up to 30% of viral particles still carry uncleaved prM. In terms of processing, N-glycosylated. N-glycosylated. The excreted form is glycosylated and this is required for efficient secretion of the protein from infected cells. Post-translationally, acetylated by host KAT5. Acetylation modulates NS3 RNA-binding and unwinding activities and plays an important positive role for viral replication. In terms of processing, phosphorylated on serines residues. This phosphorylation may trigger NS5 nuclear localization.

Its subcellular location is the virion. The protein localises to the host nucleus. The protein resides in the host cytoplasm. It is found in the host perinuclear region. It localises to the secreted. Its subcellular location is the virion membrane. The protein localises to the host endoplasmic reticulum membrane. The protein resides in the host cell surface. It carries out the reaction Selective hydrolysis of -Xaa-Xaa-|-Yaa- bonds in which each of the Xaa can be either Arg or Lys and Yaa can be either Ser or Ala.. It catalyses the reaction RNA(n) + a ribonucleoside 5'-triphosphate = RNA(n+1) + diphosphate. The enzyme catalyses a ribonucleoside 5'-triphosphate + H2O = a ribonucleoside 5'-diphosphate + phosphate + H(+). The catalysed reaction is ATP + H2O = ADP + phosphate + H(+). It carries out the reaction a 5'-end (5'-triphosphoguanosine)-ribonucleoside in mRNA + S-adenosyl-L-methionine = a 5'-end (N(7)-methyl 5'-triphosphoguanosine)-ribonucleoside in mRNA + S-adenosyl-L-homocysteine. It catalyses the reaction a 5'-end (N(7)-methyl 5'-triphosphoguanosine)-ribonucleoside in mRNA + S-adenosyl-L-methionine = a 5'-end (N(7)-methyl 5'-triphosphoguanosine)-(2'-O-methyl-ribonucleoside) in mRNA + S-adenosyl-L-homocysteine + H(+). Plays a role in virus budding by binding to the cell membrane and gathering the viral RNA into a nucleocapsid that forms the core of a mature virus particle. During virus entry, may induce genome penetration into the host cytoplasm after hemifusion induced by the surface proteins. Can migrate to the cell nucleus where it modulates host functions. Overcomes the anti-viral effects of host EXOC1 by sequestering and degrading the latter through the proteasome degradation pathway. Its function is as follows. Inhibits RNA silencing by interfering with host Dicer. In terms of biological role, prevents premature fusion activity of envelope proteins in trans-Golgi by binding to envelope protein E at pH 6.0. After virion release in extracellular space, gets dissociated from E dimers. Functionally, acts as a chaperone for envelope protein E during intracellular virion assembly by masking and inactivating envelope protein E fusion peptide. prM is the only viral peptide matured by host furin in the trans-Golgi network probably to avoid catastrophic activation of the viral fusion activity in acidic Golgi compartment prior to virion release. prM-E cleavage is inefficient, and many virions are only partially matured. These uncleaved prM would play a role in immune evasion. May play a role in virus budding. Exerts cytotoxic effects by activating a mitochondrial apoptotic pathway through M ectodomain. May display a viroporin activity. Its function is as follows. Binds to host cell surface receptor and mediates fusion between viral and cellular membranes. Efficient virus attachment to cell is, at least in part, mediated by host HSPA5. Envelope protein is synthesized in the endoplasmic reticulum in the form of heterodimer with protein prM. They play a role in virion budding in the ER, and the newly formed immature particle is covered with 60 spikes composed of heterodimer between precursor prM and envelope protein E. The virion is transported to the Golgi apparatus where the low pH causes dissociation of PrM-E heterodimers and formation of E homodimers. prM-E cleavage is inefficient, and many virions are only partially matured. These uncleaved prM would play a role in immune evasion. In terms of biological role, involved in immune evasion, pathogenesis and viral replication. Once cleaved off the polyprotein, is targeted to three destinations: the viral replication cycle, the plasma membrane and the extracellular compartment. Essential for viral replication. Required for formation of the replication complex and recruitment of other non-structural proteins to the ER-derived membrane structures. Excreted as a hexameric lipoparticle that plays a role against host immune response. Antagonizing the complement function. Binds to the host macrophages and dendritic cells. Inhibits signal transduction originating from Toll-like receptor 3 (TLR3). Functionally, component of the viral RNA replication complex that functions in virion assembly and antagonizes the host alpha/beta interferon antiviral response. Required cofactor for the serine protease function of NS3. May have membrane-destabilizing activity and form viroporins. Its function is as follows. Displays three enzymatic activities: serine protease, NTPase and RNA helicase. NS3 serine protease, in association with NS2B, performs its autocleavage and cleaves the polyprotein at dibasic sites in the cytoplasm: C-prM, NS2A-NS2B, NS2B-NS3, NS3-NS4A, NS4A-2K and NS4B-NS5. NS3 RNA helicase binds RNA and unwinds dsRNA in the 3' to 5' direction. In terms of biological role, regulates the ATPase activity of the NS3 helicase activity. NS4A allows NS3 helicase to conserve energy during unwinding. Functionally, functions as a signal peptide for NS4B and is required for the interferon antagonism activity of the latter. Induces the formation of ER-derived membrane vesicles where the viral replication takes place. Inhibits interferon (IFN)-induced host STAT1 phosphorylation and nuclear translocation, thereby preventing the establishment of cellular antiviral state by blocking the IFN-alpha/beta pathway. Inhibits STAT2 translocation in the nucleus after IFN-alpha treatment. Its function is as follows. Replicates the viral (+) and (-) RNA genome, and performs the capping of genomes in the cytoplasm. NS5 methylates viral RNA cap at guanine N-7 and ribose 2'-O positions. Besides its role in RNA genome replication, also prevents the establishment of cellular antiviral state by blocking the interferon-alpha/beta (IFN-alpha/beta) signaling pathway. Inhibits host TYK2 and STAT2 phosphorylation, thereby preventing activation of JAK-STAT signaling pathway. This Ardeidae (herons) protein is Genome polyprotein.